Consider the following 394-residue polypeptide: Na(+)/H(+) antiporter NhaA (394 aa).

Helical transmembrane passes span 14-34, 59-79, 95-115, 125-145, 154-174, 179-199, 213-233, 254-274, 292-312, 328-348, and 363-383; these read AGGL…NSAL, LLLW…GLEV, VFPA…YLLF, GWAI…ALLG, VFLL…IALF, VSLQ…YMNW, LVLW…GVIV, GLHP…NAGV, IATG…WLAV, IFAV…IASL, and LGIL…LRLV.

This sequence belongs to the NhaA Na(+)/H(+) (TC 2.A.33) antiporter family.

Its subcellular location is the cell inner membrane. The enzyme catalyses Na(+)(in) + 2 H(+)(out) = Na(+)(out) + 2 H(+)(in). Its function is as follows. Na(+)/H(+) antiporter that extrudes sodium in exchange for external protons. The polypeptide is Na(+)/H(+) antiporter NhaA (Yersinia pseudotuberculosis serotype O:1b (strain IP 31758)).